The sequence spans 97 residues: DNA-directed RNA polymerase subunit omega (97 aa).

Positions 1 to 16 (MSTPNALAAFNSSPSL) are enriched in polar residues. Residues 1–21 (MSTPNALAAFNSSPSLNAPEG) are disordered.

It belongs to the RNA polymerase subunit omega family. As to quaternary structure, the RNAP catalytic core consists of 2 alpha, 1 beta, 1 beta' and 1 omega subunit. When a sigma factor is associated with the core the holoenzyme is formed, which can initiate transcription.

It catalyses the reaction RNA(n) + a ribonucleoside 5'-triphosphate = RNA(n+1) + diphosphate. Its function is as follows. Promotes RNA polymerase assembly. Latches the N- and C-terminal regions of the beta' subunit thereby facilitating its interaction with the beta and alpha subunits. The sequence is that of DNA-directed RNA polymerase subunit omega from Saccharopolyspora erythraea (strain ATCC 11635 / DSM 40517 / JCM 4748 / NBRC 13426 / NCIMB 8594 / NRRL 2338).